The primary structure comprises 363 residues: MSAIYNFCAGPAMLPQAVMQKAQQELVDWNGLGVSVMEISHRSKEFIALTDQAEVTLRKLMSIPANYHVLFMHGGGRAQFSNVVNNFLGDNGQALYLVSGQWSSAAVTEAKKLVSEHNIDSINIVEQINGLYQVKLPDLTAIDKDYRYVHYCSNETVDGIEIFEELDSPWPIVADLSSTIMSHEIDVSKYGLIYAGAQKNIGPSGLSIVIVRDDMLKLPSLPQSSVMDYRVAVEHGSMFNTPPTFAWYLASEVFAWLAAKGGVSAMAEVNQQKAALLYDCIDSNPFYKNGVAPHNRSRMNVTFQLVNDALDSEFLAQAEQAGLVALKGHRIVGGMRASIYNAMPLAGVQALVDFMNNFAVKHS.

Arginine 42 provides a ligand contact to L-glutamate. Residues 76-77 (GR), tryptophan 102, threonine 156, aspartate 175, and glutamine 198 contribute to the pyridoxal 5'-phosphate site. Lysine 199 carries the N6-(pyridoxal phosphate)lysine modification. Pyridoxal 5'-phosphate is bound at residue 240 to 241 (NT).

Belongs to the class-V pyridoxal-phosphate-dependent aminotransferase family. SerC subfamily. As to quaternary structure, homodimer. Pyridoxal 5'-phosphate serves as cofactor.

The protein localises to the cytoplasm. The catalysed reaction is O-phospho-L-serine + 2-oxoglutarate = 3-phosphooxypyruvate + L-glutamate. It carries out the reaction 4-(phosphooxy)-L-threonine + 2-oxoglutarate = (R)-3-hydroxy-2-oxo-4-phosphooxybutanoate + L-glutamate. The protein operates within amino-acid biosynthesis; L-serine biosynthesis; L-serine from 3-phospho-D-glycerate: step 2/3. It participates in cofactor biosynthesis; pyridoxine 5'-phosphate biosynthesis; pyridoxine 5'-phosphate from D-erythrose 4-phosphate: step 3/5. In terms of biological role, catalyzes the reversible conversion of 3-phosphohydroxypyruvate to phosphoserine and of 3-hydroxy-2-oxo-4-phosphonooxybutanoate to phosphohydroxythreonine. In Shewanella frigidimarina (strain NCIMB 400), this protein is Phosphoserine aminotransferase.